The following is a 105-amino-acid chain: Putative regulatory protein COPRO5265_1186 (105 aa).

Residues 76-105 (RLEEEEEEEERTEPITEQEAELEEESGEDV) are disordered. Residues 78–105 (EEEEEEEERTEPITEQEAELEEESGEDV) are compositionally biased toward acidic residues.

Belongs to the RemA family.

The polypeptide is Putative regulatory protein COPRO5265_1186 (Coprothermobacter proteolyticus (strain ATCC 35245 / DSM 5265 / OCM 4 / BT)).